The primary structure comprises 349 residues: UDP-3-O-acylglucosamine N-acyltransferase (349 aa).

His246 serves as the catalytic Proton acceptor.

It belongs to the transferase hexapeptide repeat family. LpxD subfamily. As to quaternary structure, homotrimer.

The catalysed reaction is a UDP-3-O-[(3R)-3-hydroxyacyl]-alpha-D-glucosamine + a (3R)-hydroxyacyl-[ACP] = a UDP-2-N,3-O-bis[(3R)-3-hydroxyacyl]-alpha-D-glucosamine + holo-[ACP] + H(+). It participates in bacterial outer membrane biogenesis; LPS lipid A biosynthesis. Catalyzes the N-acylation of UDP-3-O-acylglucosamine using 3-hydroxyacyl-ACP as the acyl donor. Is involved in the biosynthesis of lipid A, a phosphorylated glycolipid that anchors the lipopolysaccharide to the outer membrane of the cell. In Trichormus variabilis (strain ATCC 29413 / PCC 7937) (Anabaena variabilis), this protein is UDP-3-O-acylglucosamine N-acyltransferase.